The chain runs to 249 residues: 2-dehydro-3-deoxy-L-rhamnonate dehydrogenase (NAD(+)) (249 aa).

Tyr-156 acts as the Proton acceptor in catalysis.

Belongs to the short-chain dehydrogenases/reductases (SDR) family. Homotetramer.

The catalysed reaction is 2-dehydro-3-deoxy-L-rhamnonate + NAD(+) = 2,4-didehydro-3-deoxy-L-rhamnonate + NADH + H(+). Its pathway is carbohydrate degradation; L-rhamnose degradation. Functionally, catalyzes the NAD(+)-dependent dehydrogenation of 2-dehydro-3-deoxy-L-rhamnonate to form 2,4-didehydro-3-deoxy-L-rhamnonate. Does not show any detectable activity in the presence of NADP(+). Catalyzes the fourth step in an alternative pathway for rhamnose utilization that does not involve phosphorylated intermediates. The sequence is that of 2-dehydro-3-deoxy-L-rhamnonate dehydrogenase (NAD(+)) from Sphingomonas sp. (strain SKA58).